The following is a 1477-amino-acid chain: Inositol hexakisphosphate and diphosphoinositol-pentakisphosphate kinase 1 (1477 aa).

The tract at residues 27–47 is disordered; the sequence is TRGLGMRPEESDSELLEDEED. Residues 37–47 are compositionally biased toward acidic residues; sequence SDSELLEDEED. A substrate-binding site is contributed by 64 to 65; the sequence is KK. Residues R145, K198, H205, R224, 248-251, and 257-259 each bind ATP; these read EEFM and DVK. 224-225 serves as a coordination point for substrate; the sequence is RK. 2 residues coordinate substrate: K259 and R273. Residues S275, D320, and 332-334 each bind ATP; that span reads DVN. A substrate-binding site is contributed by 337 to 340; that stretch reads SFVK. The polyphosphoinositide-binding domain stretch occupies residues 382–453; the sequence is PTTSGTMMEL…VLDITRLLLA (72 aa). The segment at 910 to 1016 is disordered; it reads KGVEEEGSAP…PTEMKQSGLG (107 aa). S940 and S983 each carry phosphoserine. Positions 1001-1016 are enriched in polar residues; it reads FSSSRPPTEMKQSGLG. 4 positions are modified to phosphoserine: S1033, S1069, S1141, and S1148. Disordered stretches follow at residues 1131 to 1248 and 1438 to 1477; these read HSNQ…KPCQ and REEVPQVQCPPSNANPQSQSLAPDQNAPLPPATCDSSFSH. The span at 1164 to 1182 shows a compositional bias: low complexity; sequence SSGPSSTVSSAGPSSPTAV. A compositionally biased stretch (polar residues) spans 1446–1460; it reads CPPSNANPQSQSLAP.

This sequence belongs to the histidine acid phosphatase family. VIP1 subfamily.

It is found in the cytoplasm. Its subcellular location is the cytosol. The protein localises to the cell membrane. It carries out the reaction 1D-myo-inositol hexakisphosphate + ATP = 1-diphospho-1D-myo-inositol 2,3,4,5,6-pentakisphosphate + ADP. The enzyme catalyses 5-diphospho-1D-myo-inositol 1,2,3,4,6-pentakisphosphate + ATP + H(+) = 1,5-bis(diphospho)-1D-myo-inositol 2,3,4,6-tetrakisphosphate + ADP. In terms of biological role, bifunctional inositol kinase that acts in concert with the IP6K kinases IP6K1, IP6K2 and IP6K3 to synthesize the diphosphate group-containing inositol pyrophosphates diphosphoinositol pentakisphosphate, PP-InsP5, and bis-diphosphoinositol tetrakisphosphate, (PP)2-InsP4. PP-InsP5 and (PP)2-InsP4, also respectively called InsP7 and InsP8, regulate a variety of cellular processes, including apoptosis, vesicle trafficking, cytoskeletal dynamics, exocytosis, insulin signaling and neutrophil activation. Phosphorylates inositol hexakisphosphate (InsP6) at position 1 to produce PP-InsP5 which is in turn phosphorylated by IP6Ks to produce (PP)2-InsP4. Alternatively, phosphorylates PP-InsP5 at position 1, produced by IP6Ks from InsP6, to produce (PP)2-InsP4. Activated when cells are exposed to hyperosmotic stress. The protein is Inositol hexakisphosphate and diphosphoinositol-pentakisphosphate kinase 1 of Bos taurus (Bovine).